The following is a 48-amino-acid chain: uncharacterized protein (48 aa).

The segment at 1–30 (MLGRTKLGNRNAQANNNAKKKNGFQTHFDS) is disordered.

This is an uncharacterized protein from Bacillus subtilis (strain 168).